A 248-amino-acid polypeptide reads, in one-letter code: Large ribosomal subunit protein uL30A (248 aa).

The segment at 1-44 is disordered; it reads MSQKKQKIQVEQKVPENVAKKTQRDSKLRDAVAKRRTERLAANK. Basic and acidic residues predominate over residues 8 to 41; sequence IQVEQKVPENVAKKTQRDSKLRDAVAKRRTERLA.

It belongs to the universal ribosomal protein uL30 family.

Functionally, binds to G-rich structures in 28S rRNA and in mRNAs. Plays a regulatory role in the translation apparatus; inhibits cell-free translation of mRNAs. This is Large ribosomal subunit protein uL30A (Rpl7-1) from Paramecium tetraurelia.